The chain runs to 229 residues: UPF0228 protein MA_3119 (229 aa).

Over residues 35–66 the composition is skewed to low complexity; that stretch reads STPVNTSTPVNTSTPVNTSTPVNTSTPVSTST. The segment at 35 to 67 is disordered; sequence STPVNTSTPVNTSTPVNTSTPVNTSTPVSTSTI.

The protein belongs to the UPF0228 family.

The sequence is that of UPF0228 protein MA_3119 from Methanosarcina acetivorans (strain ATCC 35395 / DSM 2834 / JCM 12185 / C2A).